Reading from the N-terminus, the 318-residue chain is Isoaspartyl peptidase/L-asparaginase (318 aa).

The active-site Nucleophile is the T180. Residues 208–211 (RVSD) and 229–232 (TGIG) contribute to the substrate site.

It belongs to the Ntn-hydrolase family. Heterotetramer of two alpha and two beta chains arranged as a dimer of alpha/beta heterodimers. In terms of processing, cleaved into an alpha and beta chain by autocatalysis; this activates the enzyme. The N-terminal residue of the beta subunit is responsible for the nucleophile hydrolase activity.

It catalyses the reaction Cleavage of a beta-linked Asp residue from the N-terminus of a polypeptide.. Degrades proteins damaged by L-isoaspartyl residue formation (also known as beta-Asp residues). Probably performs the final step in the degradation of the reserve polymer cyanophycin (depolymerizes the building block L-beta-Asp-Arg). Also has L-asparaginase activity. The chain is Isoaspartyl peptidase/L-asparaginase from Nostoc sp. (strain PCC 7120 / SAG 25.82 / UTEX 2576).